Here is a 125-residue protein sequence, read N- to C-terminus: Fumarate reductase subunit D (125 aa).

3 helical membrane passes run 30 to 50 (FAMI…MGVI), 60 to 80 (VVSF…LALP), and 105 to 125 (IACY…IFML).

This sequence belongs to the FrdD family. As to quaternary structure, part of an enzyme complex containing four subunits: a flavoprotein (FrdA), an iron-sulfur protein (FrdB), and two hydrophobic anchor proteins (FrdC and FrdD).

It is found in the cell inner membrane. Anchors the catalytic components of the fumarate reductase complex to the cell membrane, binds quinones. The polypeptide is Fumarate reductase subunit D (Vibrio vulnificus (strain YJ016)).